Reading from the N-terminus, the 292-residue chain is MNGIINLKKEAGMTSHDAVFKLRKILGTKKIGHGGTLDPDVVGVLPIAVGKATRMVEFMQDEGKIYEGEIILGYSTTTEDASGEVVAETPVLSSLDEKLVDEAIASLTGPITQIPPMYSAVKVNGRKLYEYARAGQEVERPERQVIIYQFERTSPISYDGQLARFTFRVKCSKGTYIRTLSVDLGEKLGYAAHMSHLTRTSAAGLQLEDALALEEIAEKVEAGQLDFLHPLEIGTGDLVKVFLTPEEATEVRFGRFIELDQTDKELAAFEDDKLLAILEKRGNLYKPRKVFS.

Residue Asp-38 is the Nucleophile of the active site.

This sequence belongs to the pseudouridine synthase TruB family. Type 1 subfamily.

The enzyme catalyses uridine(55) in tRNA = pseudouridine(55) in tRNA. Responsible for synthesis of pseudouridine from uracil-55 in the psi GC loop of transfer RNAs. This chain is tRNA pseudouridine synthase B, found in Streptococcus pneumoniae serotype 2 (strain D39 / NCTC 7466).